Consider the following 95-residue polypeptide: Ascorbate-specific PTS system EIIB component (95 aa).

The 95-residue stretch at 1 to 95 (MENKNLHIIA…EIKQALSKVL (95 aa)) folds into the PTS EIIB type-2 domain. The active-site Phosphocysteine intermediate is the Cys-12. A Phosphocysteine modification is found at Cys-12.

Its subcellular location is the cytoplasm. It catalyses the reaction N(pros)-phospho-L-histidyl-[protein] + L-ascorbate(out) = L-ascorbate 6-phosphate(in) + L-histidyl-[protein]. Functionally, the phosphoenolpyruvate-dependent sugar phosphotransferase system (sugar PTS), a major carbohydrate active transport system, catalyzes the phosphorylation of incoming sugar substrates concomitantly with their translocation across the cell membrane. The enzyme II UlaABC PTS system is involved in ascorbate transport. The sequence is that of Ascorbate-specific PTS system EIIB component (ulaB) from Mycoplasma pneumoniae (strain ATCC 29342 / M129 / Subtype 1) (Mycoplasmoides pneumoniae).